A 248-amino-acid polypeptide reads, in one-letter code: Probable transcriptional regulatory protein M446_6579 (248 aa).

It belongs to the TACO1 family.

Its subcellular location is the cytoplasm. This Methylobacterium sp. (strain 4-46) protein is Probable transcriptional regulatory protein M446_6579.